A 698-amino-acid chain; its full sequence is MTDSPILSPKSIAVIGASDKRGSVGATITSNIMNGFKGTVYPISPTRDTVFYKKAYKSVLDVPKSIDLAVIVIKNTLVTPVLEECGKKKIKGVIIITAGFKEVDEEGAKREQQVIDIAKKYNMQVVGPNCLGVMNLDSKTMMNSTFLKVTPKSGKIALVSQSGAICAALVEDASAQGIGFSAVVSLGNKAVMSEVDVLKILANHKQTEVIVMYLEDMGDGQEFLKVCKNITKKLKKPVLVLKSGRSPEGAKAAMSHTGALMGSDEIYDALLKQSGAIRVDTMEELFDYATAFSKQPLPSNGDLVIVSNAGGPAIISTDACSKAKIKMADITSIRKKIDEVIPPWGSSRNPVDIVGDADFNRFHNVLDRVLKHPKVGSVISMCTPSGTLNYDKLAEVIVEMSKKYKKTMLASLMGLDEGVTNREILADGNVPYYTYAEGAIRTLAAMIRFSDWVKSSPGKITKFKVNKAKAKKIFDQVKKEKRPNLLEEEGQEVLKAYGLPLPKSTLAKNEAEAVKAAKKIGYPVVMKIASPQIIHKSDAGGVKVNLTNDAEVKDAFKTIVKNAKKYNKKAEIKGVLIVEMVKGGKELIIGSKLEPGFGPVIMLGMGGIYVEVLKDVTFKLAPVTDKEADDMIASIKTQKLLQGVRGEKPSDIVKLSECIQRLSQLVSDFKEIKELDMNPVLVMEKGKGCRILDVRIGL.

The ATP-grasp domain occupies 491-544 (QEVLKAYGLPLPKSTLAKNEAEAVKAAKKIGYPVVMKIASPQIIHKSDAGGVKV). Residue 517–544 (AKKIGYPVVMKIASPQIIHKSDAGGVKV) participates in ATP binding.

The protein in the N-terminal section; belongs to the acetate CoA ligase alpha subunit family. This sequence in the C-terminal section; belongs to the acetate CoA ligase beta subunit family. Mg(2+) serves as cofactor. The cofactor is Mn(2+).

The enzyme catalyses 4-hydroxybutanoate + ATP + CoA = 4-hydroxybutanoyl-CoA + ADP + phosphate. In terms of biological role, involved in thaumarchaeal hydroxypropionate/hydroxybutyrate (HP/HB) cycle, a modified version of the autotrophic HP/HB cycle of Crenarchaeota. Catalyzes the formation of 4-hydroxybutyryl-CoA, ADP and phosphate from 4-hydroxybutyrate, coenzyme A (CoA) and ATP. Can also use acetate, propionate and butyrate, with poor catalytic efficiency. This chain is 4-hydroxybutyrate--CoA ligase [ADP-forming], found in Nitrosopumilus maritimus (strain SCM1).